Reading from the N-terminus, the 110-residue chain is Large ribosomal subunit protein uL22 (110 aa).

It belongs to the universal ribosomal protein uL22 family. Part of the 50S ribosomal subunit.

This protein binds specifically to 23S rRNA; its binding is stimulated by other ribosomal proteins, e.g. L4, L17, and L20. It is important during the early stages of 50S assembly. It makes multiple contacts with different domains of the 23S rRNA in the assembled 50S subunit and ribosome. Functionally, the globular domain of the protein is located near the polypeptide exit tunnel on the outside of the subunit, while an extended beta-hairpin is found that lines the wall of the exit tunnel in the center of the 70S ribosome. This Shigella flexneri serotype 5b (strain 8401) protein is Large ribosomal subunit protein uL22.